The following is a 461-amino-acid chain: Anthranilate synthase component 1 (461 aa).

L-tryptophan-binding positions include S43 and 238 to 240 (PYM). 273–274 (GT) contacts chorismate. E300 provides a ligand contact to Mg(2+). Residues Y388, R408, 422–424 (GAG), and G424 each bind chorismate. E437 contributes to the Mg(2+) binding site.

It belongs to the anthranilate synthase component I family. As to quaternary structure, heterotetramer consisting of two non-identical subunits: a beta subunit (TrpG) and a large alpha subunit (TrpE). It depends on Mg(2+) as a cofactor.

The catalysed reaction is chorismate + L-glutamine = anthranilate + pyruvate + L-glutamate + H(+). The protein operates within amino-acid biosynthesis; L-tryptophan biosynthesis; L-tryptophan from chorismate: step 1/5. Its activity is regulated as follows. Feedback inhibited by tryptophan. Its function is as follows. Part of a heterotetrameric complex that catalyzes the two-step biosynthesis of anthranilate, an intermediate in the biosynthesis of L-tryptophan. In the first step, the glutamine-binding beta subunit (TrpG) of anthranilate synthase (AS) provides the glutamine amidotransferase activity which generates ammonia as a substrate that, along with chorismate, is used in the second step, catalyzed by the large alpha subunit of AS (TrpE) to produce anthranilate. In the absence of TrpG, TrpE can synthesize anthranilate directly from chorismate and high concentrations of ammonia. This is Anthranilate synthase component 1 (trpE) from Methanothermobacter marburgensis (strain ATCC BAA-927 / DSM 2133 / JCM 14651 / NBRC 100331 / OCM 82 / Marburg) (Methanobacterium thermoautotrophicum).